Consider the following 195-residue polypeptide: Interferon tau-9 (195 aa).

The first 23 residues, Met1–Gly23, serve as a signal peptide directing secretion. 2 disulfides stabilise this stretch: Cys24–Cys122 and Cys52–Cys162.

This sequence belongs to the alpha/beta interferon family. IFN-alphaII subfamily. Constitutively and exclusively expressed in the mononuclear cells of the extraembryonic trophectoderm.

The protein localises to the secreted. Functionally, paracrine hormone primarily responsible for maternal recognition of pregnancy. Interacts with endometrial receptors, probably type I interferon receptors, and blocks estrogen receptor expression, preventing the estrogen-induced increase in oxytocin receptor expression in the endometrium. This results in the suppression of the pulsatile endometrial release of the luteolytic hormone prostaglandin F2-alpha, hindering the regression of the corpus luteum (luteolysis) and therefore a return to ovarian cyclicity. This, and a possible direct effect of IFN-tau on prostaglandin synthesis, leads in turn to continued ovarian progesterone secretion, which stimulates the secretion by the endometrium of the nutrients required for the growth of the conceptus. In summary, displays particularly high antiviral and antiproliferative potency concurrently with particular weak cytotoxicity, high antiluteolytic activity and immunomodulatory properties. In contrast with other IFNs, IFN-tau is not virally inducible. This is Interferon tau-9 (IFNT9) from Ovis aries (Sheep).